A 251-amino-acid polypeptide reads, in one-letter code: MRRKLAAGNWKMNGTGAALDALEAIAGAHSAAAVDLLICPPATLLYRAAQVAEGSRVRIGGQDCHAVTAGAHTGDISAMMLADAGASAVILGHSERRADHGETDAQVCDKARAALEAGLIAIICIGETLAQREAGQTLDVVCAQLAGSVPDGIDGTRVVVAYEPVWAIGTGLVPTLEQIAEVHDTLRQQLIGRFGSETAEAIRLLYGGSVKPGNAAEIFAVSNVDGALVGGASLTAADFSPIVSALEQAAG.

9-11 (NWK) serves as a coordination point for substrate. Catalysis depends on His93, which acts as the Electrophile. Catalysis depends on Glu163, which acts as the Proton acceptor. Substrate is bound by residues Gly169, Ser209, and 230-231 (GG).

Belongs to the triosephosphate isomerase family. As to quaternary structure, homodimer.

Its subcellular location is the cytoplasm. It catalyses the reaction D-glyceraldehyde 3-phosphate = dihydroxyacetone phosphate. Its pathway is carbohydrate biosynthesis; gluconeogenesis. It functions in the pathway carbohydrate degradation; glycolysis; D-glyceraldehyde 3-phosphate from glycerone phosphate: step 1/1. Functionally, involved in the gluconeogenesis. Catalyzes stereospecifically the conversion of dihydroxyacetone phosphate (DHAP) to D-glyceraldehyde-3-phosphate (G3P). This Ruegeria pomeroyi (strain ATCC 700808 / DSM 15171 / DSS-3) (Silicibacter pomeroyi) protein is Triosephosphate isomerase.